Reading from the N-terminus, the 347-residue chain is Elongation factor Ts (347 aa).

Residues 80–83 (TDFV) form an involved in Mg(2+) ion dislocation from EF-Tu region.

It belongs to the EF-Ts family.

It localises to the cytoplasm. In terms of biological role, associates with the EF-Tu.GDP complex and induces the exchange of GDP to GTP. It remains bound to the aminoacyl-tRNA.EF-Tu.GTP complex up to the GTP hydrolysis stage on the ribosome. This chain is Elongation factor Ts, found in Streptococcus gordonii (strain Challis / ATCC 35105 / BCRC 15272 / CH1 / DL1 / V288).